The primary structure comprises 629 residues: Pentatricopeptide repeat-containing protein At1g63150 (629 aa).

PPR repeat units lie at residues 46–81 (ASGD…RPFP), 82–116 (SIVE…GISH), 117–151 (DLYT…GYEP), 152–186 (DIVT…GYKP), 187–221 (DTFT…GCQP), 222–256 (DLVT…RIKA), 257–291 (NVVI…GIRP), 292–326 (NVVT…KINP), 327–361 (NVVT…SIDP), 362–396 (DTIT…DCLP), 397–431 (NIQT…GLVG), 432–466 (NTVT…RVPT), 467–501 (DIMT…EMEL), 502–532 (NIFI…LSIK), 534–568 (DVVT…GTLP), and 569–603 (NSGT…GFVG).

The protein belongs to the PPR family. P subfamily.

The chain is Pentatricopeptide repeat-containing protein At1g63150 from Arabidopsis thaliana (Mouse-ear cress).